The following is a 498-amino-acid chain: Transcription factor bHLH78 (498 aa).

Disordered stretches follow at residues 1–24 (MDNE…FEHQ) and 207–297 (LVSP…PPKD). Polar residues predominate over residues 233 to 246 (NPISTASPSPSFSK). The span at 259 to 270 (SSEEKGGKRRRE) shows a compositional bias: basic and acidic residues. The segment covering 271–281 (EEDDEEEEGEG) has biased composition (acidic residues). Positions 307–357 (QATDSHSLAERVRREKIGERMKLLQDLVPGCNKVTGKALMLDEIINYVQSL) constitute a bHLH domain.

In terms of assembly, homodimer. Binds reversibly to CRY2 after blue light illumination. As to expression, expressed constitutively in roots, leaves, stems, and flowers.

The protein resides in the nucleus. Its function is as follows. Transcription factor that binds DNA to G box 5'-CACGTG-3' and to E-box 5'-CANNTG-3'. Binds to chromatin DNA of the FT gene and promotes its expression, and thus triggers flowering in response to blue light. This Arabidopsis thaliana (Mouse-ear cress) protein is Transcription factor bHLH78 (BHLH78).